The following is a 431-amino-acid chain: Gamma-glutamyl phosphate reductase (431 aa).

This sequence belongs to the gamma-glutamyl phosphate reductase family.

The protein resides in the cytoplasm. It catalyses the reaction L-glutamate 5-semialdehyde + phosphate + NADP(+) = L-glutamyl 5-phosphate + NADPH + H(+). Its pathway is amino-acid biosynthesis; L-proline biosynthesis; L-glutamate 5-semialdehyde from L-glutamate: step 2/2. Its function is as follows. Catalyzes the NADPH-dependent reduction of L-glutamate 5-phosphate into L-glutamate 5-semialdehyde and phosphate. The product spontaneously undergoes cyclization to form 1-pyrroline-5-carboxylate. This chain is Gamma-glutamyl phosphate reductase, found in Synechococcus elongatus (strain ATCC 33912 / PCC 7942 / FACHB-805) (Anacystis nidulans R2).